Consider the following 94-residue polypeptide: Integration host factor subunit beta (94 aa).

It belongs to the bacterial histone-like protein family. As to quaternary structure, heterodimer of an alpha and a beta chain.

Its function is as follows. This protein is one of the two subunits of integration host factor, a specific DNA-binding protein that functions in genetic recombination as well as in transcriptional and translational control. The polypeptide is Integration host factor subunit beta (Pseudomonas paraeruginosa (strain DSM 24068 / PA7) (Pseudomonas aeruginosa (strain PA7))).